The sequence spans 453 residues: Probable glycine dehydrogenase (decarboxylating) subunit 1 (453 aa).

Belongs to the GcvP family. N-terminal subunit subfamily. As to quaternary structure, the glycine cleavage system is composed of four proteins: P, T, L and H. In this organism, the P 'protein' is a heterodimer of two subunits.

The catalysed reaction is N(6)-[(R)-lipoyl]-L-lysyl-[glycine-cleavage complex H protein] + glycine + H(+) = N(6)-[(R)-S(8)-aminomethyldihydrolipoyl]-L-lysyl-[glycine-cleavage complex H protein] + CO2. The glycine cleavage system catalyzes the degradation of glycine. The P protein binds the alpha-amino group of glycine through its pyridoxal phosphate cofactor; CO(2) is released and the remaining methylamine moiety is then transferred to the lipoamide cofactor of the H protein. The sequence is that of Probable glycine dehydrogenase (decarboxylating) subunit 1 from Nitrosomonas europaea (strain ATCC 19718 / CIP 103999 / KCTC 2705 / NBRC 14298).